Consider the following 856-residue polypeptide: Envelope glycoprotein gp160 (856 aa).

Residues 1-31 (MRVEGIQRNWKQWWIWGILGFWMVMIYNVRG) form the signal peptide. The Extracellular portion of the chain corresponds to 32-677 (NLWVTVYYGV…ITNWLWYIKI (646 aa)). The cysteines at positions 53 and 73 are disulfide-linked. 18 N-linked (GlcNAc...) asparagine; by host glycosylation sites follow: Asn-87, Asn-132, Asn-139, Asn-150, Asn-154, Asn-180, Asn-184, Asn-195, Asn-228, Asn-232, Asn-239, Asn-260, Asn-274, Asn-287, Asn-293, Asn-299, Asn-329, and Asn-336. 5 disulfide bridges follow: Cys-118–Cys-203, Cys-125–Cys-194, Cys-130–Cys-151, Cys-216–Cys-245, and Cys-226–Cys-237. Residues 130–150 (CSNRTIDYNNRTDNMGGEIKN) form a V1 region. Positions 151–194 (CSFNMTTEVRDKREKVHALFYRLDIVPLKNESSNTSGDYRLINC) are V2. The V3 stretch occupies residues 294-327 (CTRPNNNTRKSIRIGPGQAFYATGEIIGDIRQAH). An intrachain disulfide couples Cys-294 to Cys-328. Residues 360 to 370 (HSGGDLEITTH) are CD4-binding loop. Cystine bridges form between Cys-374/Cys-438 and Cys-381/Cys-411. Residues 381–411 (CNTSSLFNSTYTPNSTENITGTENSIITIPC) form a V4 region. Asn-382, Asn-388, Asn-394, Asn-398, and Asn-441 each carry an N-linked (GlcNAc...) asparagine; by host glycan. V5 stretches follow at residues 454–464 (GMHDTEIFRPE) and 456–464 (HDTEIFRPE). A fusion peptide region spans residues 505–525 (AVGIGAVFLGFLGAAGSTMGA). The tract at residues 567–585 (KQLQTRVLAIERYLRDQQL) is immunosuppression. Cys-591 and Cys-597 are oxidised to a cystine. N-linked (GlcNAc...) asparagine; by host glycosylation is found at Asn-604, Asn-609, Asn-618, and Asn-630. Residues 626 to 660 (REISNYTNTIYRLLEDSQNQQEKNEQDLLALDKWQ) are a coiled coil. Residues 655–676 (ALDKWQNLWTWFGITNWLWYIK) form an MPER; binding to GalCer region. Residues 678-698 (FIKIVGGLIGLRIIFAVLSIV) form a helical membrane-spanning segment. The Cytoplasmic segment spans residues 699-856 (NRVRQGYSPL…IRQGFEAALQ (158 aa)). Residues 705 to 708 (YSPL) carry the YXXL motif; contains endocytosis signal motif. The interval 712–732 (TLTPNPRGPDRLGGIEEEGGE) is disordered. Cys-757 carries S-palmitoyl cysteine; by host lipidation.

It belongs to the HIV-1 env protein family. The mature envelope protein (Env) consists of a homotrimer of non-covalently associated gp120-gp41 heterodimers. The resulting complex protrudes from the virus surface as a spike. There seems to be as few as 10 spikes on the average virion. Interacts with host CD4, CCR5 and CXCR4. Gp120 also interacts with the C-type lectins CD209/DC-SIGN and CLEC4M/DC-SIGNR (collectively referred to as DC-SIGN(R)). Gp120 and gp41 interact with GalCer. Gp120 interacts with host ITGA4/ITGB7 complex; on CD4+ T-cells, this interaction results in rapid activation of integrin ITGAL/LFA-1, which facilitates efficient cell-to-cell spreading of HIV-1. Gp120 interacts with cell-associated heparan sulfate; this interaction increases virus infectivity on permissive cells and may be involved in infection of CD4- cells. As to quaternary structure, the mature envelope protein (Env) consists of a homotrimer of non-covalently associated gp120-gp41 heterodimers. The resulting complex protrudes from the virus surface as a spike. There seems to be as few as 10 spikes on the average virion. Highly glycosylated by host. The high number of glycan on the protein is reffered to as 'glycan shield' because it contributes to hide protein sequence from adaptive immune system. Post-translationally, palmitoylation of the transmembrane protein and of Env polyprotein (prior to its proteolytic cleavage) is essential for their association with host cell membrane lipid rafts. Palmitoylation is therefore required for envelope trafficking to classical lipid rafts, but not for viral replication. In terms of processing, specific enzymatic cleavages in vivo yield mature proteins. Envelope glycoproteins are synthesized as an inactive precursor that is heavily N-glycosylated and processed likely by host cell furin in the Golgi to yield the mature SU and TM proteins. The cleavage site between SU and TM requires the minimal sequence [KR]-X-[KR]-R. About 2 of the 9 disulfide bonds of gp41 are reduced by P4HB/PDI, following binding to CD4 receptor.

Its subcellular location is the virion membrane. It localises to the host cell membrane. The protein localises to the host endosome membrane. Oligomerizes in the host endoplasmic reticulum into predominantly trimers. In a second time, gp160 transits in the host Golgi, where glycosylation is completed. The precursor is then proteolytically cleaved in the trans-Golgi and thereby activated by cellular furin or furin-like proteases to produce gp120 and gp41. Its function is as follows. Attaches the virus to the host lymphoid cell by binding to the primary receptor CD4. This interaction induces a structural rearrangement creating a high affinity binding site for a chemokine coreceptor like CXCR4 and/or CCR5. Acts as a ligand for CD209/DC-SIGN and CLEC4M/DC-SIGNR, which are respectively found on dendritic cells (DCs), and on endothelial cells of liver sinusoids and lymph node sinuses. These interactions allow capture of viral particles at mucosal surfaces by these cells and subsequent transmission to permissive cells. HIV subverts the migration properties of dendritic cells to gain access to CD4+ T-cells in lymph nodes. Virus transmission to permissive T-cells occurs either in trans (without DCs infection, through viral capture and transmission), or in cis (following DCs productive infection, through the usual CD4-gp120 interaction), thereby inducing a robust infection. In trans infection, bound virions remain infectious over days and it is proposed that they are not degraded, but protected in non-lysosomal acidic organelles within the DCs close to the cell membrane thus contributing to the viral infectious potential during DCs' migration from the periphery to the lymphoid tissues. On arrival at lymphoid tissues, intact virions recycle back to DCs' cell surface allowing virus transmission to CD4+ T-cells. In terms of biological role, acts as a class I viral fusion protein. Under the current model, the protein has at least 3 conformational states: pre-fusion native state, pre-hairpin intermediate state, and post-fusion hairpin state. During fusion of viral and target intracellular membranes, the coiled coil regions (heptad repeats) assume a trimer-of-hairpins structure, positioning the fusion peptide in close proximity to the C-terminal region of the ectodomain. The formation of this structure appears to drive apposition and subsequent fusion of viral and target cell membranes. Complete fusion occurs in host cell endosomes and is dynamin-dependent, however some lipid transfer might occur at the plasma membrane. The virus undergoes clathrin-dependent internalization long before endosomal fusion, thus minimizing the surface exposure of conserved viral epitopes during fusion and reducing the efficacy of inhibitors targeting these epitopes. Membranes fusion leads to delivery of the nucleocapsid into the cytoplasm. The sequence is that of Envelope glycoprotein gp160 from Homo sapiens (Human).